The primary structure comprises 278 residues: Small ribosomal subunit protein uS3 (278 aa).

Residues leucine 39–serine 107 enclose the KH type-2 domain. The segment at alanine 255–glutamate 278 is disordered.

Belongs to the universal ribosomal protein uS3 family. In terms of assembly, part of the 30S ribosomal subunit. Forms a tight complex with proteins S10 and S14.

Binds the lower part of the 30S subunit head. Binds mRNA in the 70S ribosome, positioning it for translation. This is Small ribosomal subunit protein uS3 from Dehalococcoides mccartyi (strain CBDB1).